A 459-amino-acid polypeptide reads, in one-letter code: Ribulose bisphosphate carboxylase large chain (459 aa).

Lys-4 carries the N6,N6,N6-trimethyllysine modification. Positions 113 and 163 each coordinate substrate. The Proton acceptor role is filled by Lys-165. Lys-167 is a binding site for substrate. 3 residues coordinate Mg(2+): Lys-191, Asp-193, and Glu-194. Residue Lys-191 is modified to N6-carboxylysine. His-284 serves as the catalytic Proton acceptor. 3 residues coordinate substrate: Arg-285, His-317, and Ser-369.

Belongs to the RuBisCO large chain family. Type I subfamily. Heterohexadecamer of 8 large chains and 8 small chains; disulfide-linked. The disulfide link is formed within the large subunit homodimers. Requires Mg(2+) as cofactor. In terms of processing, the disulfide bond which can form in the large chain dimeric partners within the hexadecamer appears to be associated with oxidative stress and protein turnover.

It is found in the plastid. The protein localises to the chloroplast. The enzyme catalyses 2 (2R)-3-phosphoglycerate + 2 H(+) = D-ribulose 1,5-bisphosphate + CO2 + H2O. It catalyses the reaction D-ribulose 1,5-bisphosphate + O2 = 2-phosphoglycolate + (2R)-3-phosphoglycerate + 2 H(+). Its function is as follows. RuBisCO catalyzes two reactions: the carboxylation of D-ribulose 1,5-bisphosphate, the primary event in carbon dioxide fixation, as well as the oxidative fragmentation of the pentose substrate in the photorespiration process. Both reactions occur simultaneously and in competition at the same active site. The protein is Ribulose bisphosphate carboxylase large chain of Micranthes integrifolia (Wholeleaf saxifrage).